The following is a 61-amino-acid chain: Copper metallothionein 1-1 (61 aa).

The propeptide occupies 1–8; sequence MFSELINF. Residues C15, C17, C19, C22, and C28 each contribute to the Cu cation site. A Glycyl lysine isopeptide (Lys-Gly) (interchain with G-Cter in ubiquitin) cross-link involves residue K30. 5 residues coordinate Cu cation: C32, C34, C38, C44, and C46. The interval 37-61 is disordered; it reads GCNSDDKCPCGNKSEETKKSCCSGK. Residues 40–55 show a composition bias toward basic and acidic residues; sequence SDDKCPCGNKSEETKK.

It belongs to the metallothionein superfamily. Type 12 family.

Its function is as follows. Protects the cell against copper toxicity by tightly chelating copper ions. May also act as a depository for copper designated for the effective transfer into the apo forms of copper proteins. The protein is Copper metallothionein 1-1 (CUP1-1) of Saccharomyces cerevisiae (strain ATCC 204508 / S288c) (Baker's yeast).